An 860-amino-acid chain; its full sequence is MEGLEIEDEDVILLDEDDDSSSSSTVNNSSSNIKNNGNTNNNIGNDDSNKVTLMTSLREKGWGSGMLVDKEKNQYGTIKSYKDDKSSPWFEERQVIATLYKARVLLHEMIYTKMNQERLLSGNLCVGEIQSLLNTQKEDVETDWIAEIQELKRNMVAEIRRNHLLERDVNKLDKRIALLIKHRSNIKDLLLEQNKGKKDKKKKGDDKAEYITLDQKQLESYQNLFYLLQTEPHYLAKLVTLIQADQMEDFLDTVFLTLFGDDFSPREEFLILSLFRLAIGQEMSRIKSAGDLLAVESVVPKMIITYTRRKQGHEFLKQIIAPILENNVVNAPDLNLELNAVQVYQNMISEQEIQTGAKSTLNRGLAEDQIIQLKEVQSILEPRVEKCIQICERFFTGIIQSLNRLPYGIRWICKQIQSIAQKNFDSKPDEIAKVIGYFVYYRFINLAIVTPDAFEILDKELSITSRKNLVNIAKVLQNLFTLKTFQNQGSERWMQPLNKWILSKTSIVRQYLEDLIQVTDPSEYLRVDKYNELTLKLNPVVVISLGEISQTHRLLIANLAALKMKEKEDPLELILKALPAPLEVVDENDREIQLTLINRFKENIEKEISISASLLAETKELVISVLRSIPIQQKQQQQQHDDEKRDDLISILQNAIKHGKETNNPQLSSNAEKIINNLKKMEAEGSIQSENNQYEGFIKVIALEVINRQEIREQQRKERMRLTIALRDLRKHQSYLNDQIQHYTSYLKDVLLHYGPKDKKKSTKPMKISFKELTKKGVIVESDIPKLSHGSTSFYISSDAPGIFDIEARIGVASVGTLSLSLDDLLDKSSAGIPYLKLENIVLDVNMTLHLLNRHFLKNI.

Residues 1–20 (MEGLEIEDEDVILLDEDDDS) are compositionally biased toward acidic residues. The disordered stretch occupies residues 1–48 (MEGLEIEDEDVILLDEDDDSSSSSTVNNSSSNIKNNGNTNNNIGNDDS). The segment covering 21 to 46 (SSSSTVNNSSSNIKNNGNTNNNIGND) has biased composition (low complexity). Residues 146-185 (AEIQELKRNMVAEIRRNHLLERDVNKLDKRIALLIKHRSN) adopt a coiled-coil conformation. One can recognise a Ras-GAP domain in the interval 269–515 (FLILSLFRLA…SIVRQYLEDL (247 aa)). The stretch at 663–732 (NNPQLSSNAE…TIALRDLRKH (70 aa)) forms a coiled coil.

Heterotetramer. Quaternary complex with activated rac1A, ctxA and ctxB in the absence of rgaA.

Part of signaling pathway that is required for completion of cytokinesis. gapA and rgaA control cortexillin localization to the cleavage furrow and hence may be involved in cleavage of the midbody in the final stage of cytokinesis by regulating the actin cytoskeleton. Forms a complex by linking activated rac1A to ctxA in the absence of rgaA. Assembly of this complex is necessary for the recruitment of cortexillin to the midzone of the dividing cell. The polypeptide is Ras GTPase-activating-like protein gapA (gapA) (Dictyostelium discoideum (Social amoeba)).